A 381-amino-acid chain; its full sequence is Protein COS8 (381 aa).

The Extracellular portion of the chain corresponds to 1 to 42 (MKENEVKDEKSVDVLSFKQLEFQKTVLPQDVFRNELTWFCYE). A helical transmembrane segment spans residues 43-63 (IYKSLAFRIWMLLWLPLSVWW). Topologically, residues 64–72 (KLSSNWIHP) are cytoplasmic. A helical membrane pass occupies residues 73 to 93 (LIVSLLVLFLGPFFVLVICGL). The Extracellular portion of the chain corresponds to 94–237 (SRKRSLSKQL…WILKRIFNLR (144 aa)). The chain crosses the membrane as a helical span at residues 238–258 (CLPLFLYYFLIVYTSGNADLI). The Cytoplasmic portion of the chain corresponds to 259–381 (SRFLFPVVMF…QSARNEKPLK (123 aa)).

The protein belongs to the DUP/COS family.

The protein resides in the membrane. This is Protein COS8 (COS8) from Saccharomyces cerevisiae (strain ATCC 204508 / S288c) (Baker's yeast).